A 159-amino-acid polypeptide reads, in one-letter code: 2-C-methyl-D-erythritol 2,4-cyclodiphosphate synthase (159 aa).

Positions 8 and 10 each coordinate a divalent metal cation. 4-CDP-2-C-methyl-D-erythritol 2-phosphate-binding positions include 8 to 10 and 34 to 35; these read DVH and HS. Histidine 42 contacts a divalent metal cation. 4-CDP-2-C-methyl-D-erythritol 2-phosphate is bound by residues 56–58, 61–65, 100–106, 132–135, phenylalanine 139, and arginine 142; these read DIG, FPDTD, AQAPKML, and TTTE.

It belongs to the IspF family. In terms of assembly, homotrimer. It depends on a divalent metal cation as a cofactor.

The catalysed reaction is 4-CDP-2-C-methyl-D-erythritol 2-phosphate = 2-C-methyl-D-erythritol 2,4-cyclic diphosphate + CMP. It functions in the pathway isoprenoid biosynthesis; isopentenyl diphosphate biosynthesis via DXP pathway; isopentenyl diphosphate from 1-deoxy-D-xylulose 5-phosphate: step 4/6. In terms of biological role, involved in the biosynthesis of isopentenyl diphosphate (IPP) and dimethylallyl diphosphate (DMAPP), two major building blocks of isoprenoid compounds. Catalyzes the conversion of 4-diphosphocytidyl-2-C-methyl-D-erythritol 2-phosphate (CDP-ME2P) to 2-C-methyl-D-erythritol 2,4-cyclodiphosphate (ME-CPP) with a corresponding release of cytidine 5-monophosphate (CMP). The sequence is that of 2-C-methyl-D-erythritol 2,4-cyclodiphosphate synthase from Escherichia coli O81 (strain ED1a).